A 213-amino-acid polypeptide reads, in one-letter code: Putative thymidylate kinase 251L (213 aa).

21-28 (GCDKTGKS) contacts ATP.

It belongs to the thymidylate kinase family.

The enzyme catalyses dTMP + ATP = dTDP + ADP. The protein operates within pyrimidine metabolism; dTTP biosynthesis. Its function is as follows. Catalyzes the conversion of dTMP to dTDP. This Acheta domesticus (House cricket) protein is Putative thymidylate kinase 251L.